We begin with the raw amino-acid sequence, 187 residues long: Phosphatidylethanolamine-binding protein 2 (187 aa).

Phosphoserine is present on residues Ser13, Ser52, and Ser54.

Belongs to the phosphatidylethanolamine-binding protein family. Testis specific.

It localises to the cytoplasm. In terms of biological role, may bind to phospholipids. May act as serine protease inhibitor. The polypeptide is Phosphatidylethanolamine-binding protein 2 (Pbp2) (Mus musculus (Mouse)).